A 360-amino-acid chain; its full sequence is G-protein coupled receptor 183 (360 aa).

Topologically, residues 1–30 are extracellular; that stretch reads MDIKMDNFTTPSAASLESDCDLYAHHHTAR. A glycan (N-linked (GlcNAc...) asparagine) is linked at asparagine 7. Residues 31 to 56 traverse the membrane as a helical segment; the sequence is ILMPLHYSIVFIIGLVGNLLALIVII. At 57-76 the chain is on the cytoplasmic side; sequence QNRKKINSTTLYSTNLVISD. Residues 77–94 traverse the membrane as a helical segment; sequence ILFTTALPTRIAYYALGF. Position 86 (arginine 86) interacts with 7alpha,25-dihydroxycholesterol. Residues 95 to 104 are Extracellular-facing; the sequence is DWRIGDALCR. A disulfide bridge connects residues cysteine 103 and cysteine 180. The chain crosses the membrane as a helical span at residues 105–126; the sequence is ITALVFYINTYAGVNFMTCLSI. Tyrosine 111 and tyrosine 115 together coordinate 7alpha,25-dihydroxycholesterol. Positions 125 to 133 are interaction with G proteins; sequence SIDRFFAVV. Topologically, residues 127–148 are cytoplasmic; that stretch reads DRFFAVVHPLRYNKIKRIEHAK. A helical membrane pass occupies residues 149–167; that stretch reads CICIFVWILVFGQTLPLLI. Topologically, residues 168–191 are extracellular; sequence NPMSKQEAERTTCMEYPNFEETKS. Residues 192–214 form a helical membrane-spanning segment; that stretch reads LPWILLGACFIGYVLPLVIILIC. The Cytoplasmic segment spans residues 215 to 240; that stretch reads YSQICCKLFKTAKQNPLTEKSGVNKK. Residues 241–264 traverse the membrane as a helical segment; sequence ALNTIIFIIVVFVVCFTPYHVAII. Tyrosine 259 is a 7alpha,25-dihydroxycholesterol binding site. Residues 265–286 lie on the Extracellular side of the membrane; it reads QHMIKKLRLPGLLECSQRHSFQ. The helical transmembrane segment at 287 to 311 threads the bilayer; that stretch reads ISLHFTVCLMNFNCCMDPFIYFFAC. At 312–360 the chain is on the cytoplasmic side; that stretch reads KGYKRKVMKMLKRQVSVSISSAVRSAPEENSREMTETQMMIHSKSLNGK. Residue serine 327 is modified to Phosphoserine. Positions 339-360 are disordered; it reads EENSREMTETQMMIHSKSLNGK. Positions 347 to 360 are enriched in polar residues; sequence ETQMMIHSKSLNGK.

It belongs to the G-protein coupled receptor 1 family. As to quaternary structure, homodimer and heterodimer. Heterodimerizes with CXCR5; leading to modulate the interaction between of CXCL13 and CXCR5.

It localises to the cell membrane. Its function is as follows. G-protein coupled receptor expressed in lymphocytes that acts as a chemotactic receptor for B-cells, T-cells, splenic dendritic cells, monocytes/macrophages and astrocytes. Receptor for oxysterol 7-alpha,25-dihydroxycholesterol (7-alpha,25-OHC) and other related oxysterols. Mediates cell positioning and movement of a number of cells by binding the 7-alpha,25-OHC ligand that forms a chemotactic gradient. Binding of 7-alpha,25-OHC mediates the correct localization of B-cells during humoral immune responses. Guides B-cell movement along the B-cell zone-T-cell zone boundary and later to interfollicular and outer follicular regions. Its specific expression during B-cell maturation helps position B-cells appropriately for mounting T-dependent antibody responses. Collaborates with CXCR5 to mediate B-cell migration; probably by forming a heterodimer with CXCR5 that affects the interaction between of CXCL13 and CXCR5. Also acts as a chemotactic receptor for some T-cells upon binding to 7-alpha,25-OHC ligand. Promotes follicular helper T (Tfh) cells differentiation by positioning activated T-cells at the follicle-T-zone interface, promoting contact of newly activated CD4 T-cells with activated dendritic cells and exposing them to Tfh-cell-promoting inducible costimulator (ICOS) ligand. Expression in splenic dendritic cells is required for their homeostasis, localization and ability to induce B- and T-cell responses: GPR183 acts as a chemotactic receptor in dendritic cells that mediates the accumulation of CD4(+) dendritic cells in bridging channels. Regulates migration of astrocytes and is involved in communication between astrocytes and macrophages. Promotes osteoclast precursor migration to bone surfaces. Signals constitutively through G(i)-alpha, but not G(s)-alpha or G(q)-alpha. Signals constitutively also via MAPK1/3 (ERK1/2). In Bos taurus (Bovine), this protein is G-protein coupled receptor 183 (GPR183).